The primary structure comprises 236 residues: Putative N-acetylmannosamine-6-phosphate 2-epimerase (236 aa).

This sequence belongs to the NanE family.

The catalysed reaction is an N-acyl-D-glucosamine 6-phosphate = an N-acyl-D-mannosamine 6-phosphate. It participates in amino-sugar metabolism; N-acetylneuraminate degradation; D-fructose 6-phosphate from N-acetylneuraminate: step 3/5. Functionally, converts N-acetylmannosamine-6-phosphate (ManNAc-6-P) to N-acetylglucosamine-6-phosphate (GlcNAc-6-P). In Listeria welshimeri serovar 6b (strain ATCC 35897 / DSM 20650 / CCUG 15529 / CIP 8149 / NCTC 11857 / SLCC 5334 / V8), this protein is Putative N-acetylmannosamine-6-phosphate 2-epimerase.